The chain runs to 272 residues: Lectin-like protein At1g53070 (272 aa).

A signal peptide spans 1–23 (MKIQILCFTTLFLAIFTSQVTTA). Residues 24–271 (YKFKFDYFGN…RHEIWDWTFQ (248 aa)) form a legume-lectin like region. 3 N-linked (GlcNAc...) asparagine glycosylation sites follow: Asn33, Asn84, and Asn134. Ser241 bears the Phosphoserine mark.

Belongs to the leguminous lectin family.

Its subcellular location is the secreted. The protein localises to the extracellular space. It localises to the apoplast. The sequence is that of Lectin-like protein At1g53070 from Arabidopsis thaliana (Mouse-ear cress).